The sequence spans 571 residues: Potassium-transporting ATPase potassium-binding subunit (571 aa).

Transmembrane regions (helical) follow at residues 7–27 (LQFA…GGYL), 66–86 (TYAL…YGIA), 137–157 (GLAV…AALI), 188–208 (FVVA…GFIV), 255–275 (IGNF…CFAF), 286–306 (WAVL…AMSF), 390–410 (VGLN…GLMV), 430–450 (TLYI…SVLI), 497–517 (IGVA…AIAG), and 538–558 (LFVG…FFPA).

It belongs to the KdpA family. As to quaternary structure, the system is composed of three essential subunits: KdpA, KdpB and KdpC.

It localises to the cell membrane. In terms of biological role, part of the high-affinity ATP-driven potassium transport (or Kdp) system, which catalyzes the hydrolysis of ATP coupled with the electrogenic transport of potassium into the cytoplasm. This subunit binds the extracellular potassium ions and delivers the ions to the membrane domain of KdpB through an intramembrane tunnel. The chain is Potassium-transporting ATPase potassium-binding subunit from Mycobacterium bovis (strain ATCC BAA-935 / AF2122/97).